The primary structure comprises 162 residues: Probable tRNA (guanine(10)-N2)-dimethyltransferase (162 aa).

The protein belongs to the methyltransferase superfamily. Trm-G10 family. In terms of assembly, monomer.

The protein localises to the cytoplasm. It carries out the reaction guanosine(10) in tRNA + 2 S-adenosyl-L-methionine = N(2)-dimethylguanosine(10) in tRNA + 2 S-adenosyl-L-homocysteine + 2 H(+). Functionally, catalyzes the adenosylmethionine-dependent methylation of the exocyclic amino group (N(2)) of guanosine at position 10 of various tRNAs. Acts via a two-step process that leads to the formation of either N(2)-monomethyl (m(2)G) or N(2)-dimethylguanosine (m(2)(2)G). The protein is Probable tRNA (guanine(10)-N2)-dimethyltransferase (trmG10) of Methanothermococcus thermolithotrophicus (Methanococcus thermolithotrophicus).